The following is a 219-amino-acid chain: Ras-related protein Rab-3B (219 aa).

Position 2 is an N-acetylalanine (alanine 2). 9 residues coordinate GTP: serine 31, serine 32, valine 33, glycine 34, lysine 35, threonine 36, serine 37, proline 49, and serine 53. Threonine 36 is a Mg(2+) binding site. The Switch 1 motif lies at 45–58; the sequence is DTFTPAFVSTVGID. 2 residues coordinate Mg(2+): threonine 54 and aspartate 77. Positions 78–96 match the Switch 2 motif; sequence TAGQERYRTITTAYYRGAM. Residue glycine 80 coordinates GTP. Threonine 86 is subject to Phosphothreonine. Asparagine 135, lysine 136, aspartate 138, alanine 166, and lysine 167 together coordinate GTP. Serine 188 and serine 190 each carry phosphoserine. 2 S-geranylgeranyl cysteine lipidation sites follow: cysteine 217 and cysteine 219. At cysteine 219 the chain carries Cysteine methyl ester.

Belongs to the small GTPase superfamily. Rab family. As to quaternary structure, interacts with RIMS1, RIMS2, RPH3A and RPH3AL. The GTP-bound form interacts with GAS8/DRC4 (via coiled-coil domains). Interacts with GDI2, CHM and CHML; phosphorylation at Thr-86 disrupts these interactions. Interacts with MADD (via uDENN domain); the GTP-bound form is preferred for interaction. It depends on Mg(2+) as a cofactor. In terms of processing, phosphorylation of Thr-86 in the switch II region by LRRK2 prevents the association of RAB regulatory proteins, including CHM, CHML and RAB GDP dissociation inhibitor GDI2.

It is found in the cell membrane. The protein localises to the golgi apparatus. The enzyme catalyses GTP + H2O = GDP + phosphate + H(+). With respect to regulation, regulated by guanine nucleotide exchange factors (GEFs) which promote the exchange of bound GDP for free GTP. Regulated by GTPase activating proteins (GAPs) which increase the GTP hydrolysis activity. Inhibited by GDP dissociation inhibitors (GDIs) which prevent Rab-GDP dissociation. In terms of biological role, the small GTPases Rab are key regulators of intracellular membrane trafficking, from the formation of transport vesicles to their fusion with membranes. Rabs cycle between an inactive GDP-bound form and an active GTP-bound form that is able to recruit to membranes different sets of downstream effectors directly responsible for vesicle formation, movement, tethering and fusion. This Mesocricetus auratus (Golden hamster) protein is Ras-related protein Rab-3B (RAB3B).